The sequence spans 695 residues: Threonine--tRNA ligase 1, cytoplasmic (695 aa).

The disordered stretch occupies residues M1–P21. In terms of domain architecture, TGS spans D51 to K115. At K215 the chain carries N6-acetyllysine. T218 carries the phosphothreonine modification. Y270 is modified (phosphotyrosine). Residue T425 is modified to Phosphothreonine.

Belongs to the class-II aminoacyl-tRNA synthetase family. In terms of assembly, homodimer. Post-translationally, ISGylated.

The protein resides in the cytoplasm. It carries out the reaction tRNA(Thr) + L-threonine + ATP = L-threonyl-tRNA(Thr) + AMP + diphosphate + H(+). Its function is as follows. Catalyzes the attachment of threonine to tRNA(Thr) in a two-step reaction: threonine is first activated by ATP to form Thr-AMP and then transferred to the acceptor end of tRNA(Thr). Also edits incorrectly charged tRNA(Thr) via its editing domain, at the post-transfer stage. The sequence is that of Threonine--tRNA ligase 1, cytoplasmic (Tars1) from Rattus norvegicus (Rat).